Reading from the N-terminus, the 323-residue chain is Arginase-1 (323 aa).

The disordered stretch occupies residues 1 to 27 (MSSKPKSLEIIGAPFSKGQPRGGVEKG). S7 is subject to Phosphoserine. N6-succinyllysine is present on K17. S62 and S72 each carry phosphoserine. N6-succinyllysine is present on K75. H101, D124, H126, and D128 together coordinate Mn(2+). Substrate contacts are provided by residues 126-130 (HTDIN) and 137-139 (SGN). S163 is modified (phosphoserine). A substrate-binding site is contributed by D183. S217 is modified (phosphoserine). 2 residues coordinate Mn(2+): D232 and D234. Positions 246 and 277 each coordinate substrate. The residue at position 281 (T281) is a Phosphothreonine.

Belongs to the arginase family. Homotrimer. Interacts with CMTM6. Mn(2+) serves as cofactor. As to expression, expressed in macrophages. Expressed in precursor and mature group 2 innate lymphoid cells (ILC2s). Expressed in lung tumor-associated myeloid cells. Expressed in lung tumor-infiltrating dendritic cells.

Its subcellular location is the cytoplasm. The protein resides in the cytoplasmic granule. It carries out the reaction L-arginine + H2O = urea + L-ornithine. Its pathway is nitrogen metabolism; urea cycle; L-ornithine and urea from L-arginine: step 1/1. In terms of biological role, key element of the urea cycle converting L-arginine to urea and L-ornithine, which is further metabolized into metabolites proline and polyamides that drive collagen synthesis and bioenergetic pathways critical for cell proliferation, respectively; the urea cycle takes place primarily in the liver and, to a lesser extent, in the kidneys. Functionally, functions in L-arginine homeostasis in nonhepatic tissues characterized by the competition between nitric oxide synthase (NOS) and arginase for the available intracellular substrate arginine. Arginine metabolism is a critical regulator of innate and adaptive immune responses. Involved in an antimicrobial effector pathway in polymorphonuclear granulocytes (PMN). Upon PMN cell death is liberated from the phagolysosome and depletes arginine in the microenvironment leading to suppressed T cell and natural killer (NK) cell proliferation and cytokine secretion. In group 2 innate lymphoid cells (ILC2s) promotes acute type 2 inflammation in the lung and is involved in optimal ILC2 proliferation but not survival. Plays a role in the immune response of alternatively activated or M2 macrophages in processes such as wound healing and tissue regeneration, immune defense against multicellular pathogens and parasites, and immune suppression and allergic inflammation; the regulatory outcome seems to be organ specific. In tumor-infiltrating dendritic cells (DCs) and myeloid-derived suppressor cells (MDSCs) plays a role in suppression of T cell-mediated antitumor immunity. This chain is Arginase-1 (Arg1), found in Mus musculus (Mouse).